The chain runs to 89 residues: Small ribosomal subunit protein uS15 (89 aa).

Residues 1–23 (MALTKERTASVVQQYGSGEKDTG) form a disordered region.

It belongs to the universal ribosomal protein uS15 family. In terms of assembly, part of the 30S ribosomal subunit. Forms a bridge to the 50S subunit in the 70S ribosome, contacting the 23S rRNA.

In terms of biological role, one of the primary rRNA binding proteins, it binds directly to 16S rRNA where it helps nucleate assembly of the platform of the 30S subunit by binding and bridging several RNA helices of the 16S rRNA. Forms an intersubunit bridge (bridge B4) with the 23S rRNA of the 50S subunit in the ribosome. The chain is Small ribosomal subunit protein uS15 from Treponema pallidum (strain Nichols).